A 366-amino-acid polypeptide reads, in one-letter code: Mitochondrial carrier protein MTM1 (366 aa).

Solcar repeat units follow at residues 14–149 (ERML…IRDV), 156–250 (YPTL…CKER), and 266–359 (VHFI…SKKV). Transmembrane regions (helical) follow at residues 17-36 (LSAGAGSVLTSLILTPMDVV), 126-146 (SLTLLMAIPANMVYFSGYEYI), 162-182 (LFCGAIARVFAATSIAPLELV), 229-249 (TLWRDVPFSAIYWSSYELCKE), 268-286 (FINSFASGCISGMIAAICT), and 331-352 (LYTGLAARVIKIRPSCAIMISS).

It belongs to the mitochondrial carrier (TC 2.A.29) family.

It localises to the mitochondrion inner membrane. Involved in the mitochondrial activation of SOD2 by specifically facilitating insertion of the essential manganese cofactor. Has the ability to activate iron regulon in an iron-dependent manner. Responds to calorie restriction (CR) strength. This chain is Mitochondrial carrier protein MTM1 (MTM1), found in Saccharomyces cerevisiae (strain ATCC 204508 / S288c) (Baker's yeast).